Reading from the N-terminus, the 533-residue chain is MEMKSNYVDIFKREIFPAKVRVEKGKIASIERIDTPCDTYILPGFVDAHIHIESSMLPPSEFARLAVCHGTVATVSDPHEIANVLGIPGVGYMLDNSEMTPFKFYFGASPCVPATTFETSGATLGPDEIESLLKMPQIKYLSEVMNFPGVINGDPDMLAKIAKAKALHKRIDGHAPGLRGDELTKYIEAGIETDHEAFTYEEGLEKLQKGMKILIREGSAAKNFEALAPLIPAYPNKLMFCSDDRHPNDLAREHIDGHVRRAIAKGYDLFDVLRIASVNPVEHYGLEVGLLRVGDPADFIVVEDLKDFKVLQTVIDGEIVARGKKPLIDSVTVETPNHFHTGIKKEEDFILERCVHTEIIHALDHSLITEEEIMDLSSGKAKDVLKITVVNRYEDVKPAVAYVHGFGLKKGAIASSVAHDSHNIIAVGCSDALIAKAVNTIIGNRGGICAVTEEEIEVLSLPIAGLMSDKDGFEVANRYADLDRMVREYFTSLLSAPFMTLSFMALLVIPELKLSDKGLFDGRSFHFIDSCRR.

This sequence belongs to the metallo-dependent hydrolases superfamily. Adenine deaminase family. Requires Mn(2+) as cofactor.

It carries out the reaction adenine + H2O + H(+) = hypoxanthine + NH4(+). This chain is Adenine deaminase, found in Sulfurovum sp. (strain NBC37-1).